Here is a 186-residue protein sequence, read N- to C-terminus: Ribosome maturation factor RimM (186 aa).

Residues 103-174 (PEEYHYSDLI…ELQVQPPPGL (72 aa)) form the PRC barrel domain.

This sequence belongs to the RimM family. As to quaternary structure, binds ribosomal protein uS19.

It is found in the cytoplasm. Functionally, an accessory protein needed during the final step in the assembly of 30S ribosomal subunit, possibly for assembly of the head region. Essential for efficient processing of 16S rRNA. May be needed both before and after RbfA during the maturation of 16S rRNA. It has affinity for free ribosomal 30S subunits but not for 70S ribosomes. The protein is Ribosome maturation factor RimM of Synechococcus sp. (strain JA-3-3Ab) (Cyanobacteria bacterium Yellowstone A-Prime).